Here is a 328-residue protein sequence, read N- to C-terminus: tRNA uridine(34) hydroxylase (328 aa).

The Rhodanese domain occupies L130 to E224. Residue C184 is the Cysteine persulfide intermediate of the active site.

The protein belongs to the TrhO family.

It carries out the reaction uridine(34) in tRNA + AH2 + O2 = 5-hydroxyuridine(34) in tRNA + A + H2O. Catalyzes oxygen-dependent 5-hydroxyuridine (ho5U) modification at position 34 in tRNAs. This chain is tRNA uridine(34) hydroxylase, found in Streptococcus agalactiae serotype Ia (strain ATCC 27591 / A909 / CDC SS700).